The following is a 363-amino-acid chain: Protein-glutamate methylesterase/protein-glutamine glutaminase 1 (363 aa).

In terms of domain architecture, Response regulatory spans K7–E124. Position 58 is a 4-aspartylphosphate (D58). The 193-residue stretch at F164–Q356 folds into the CheB-type methylesterase domain. Active-site residues include S176, H202, and D298.

It belongs to the CheB family. In terms of processing, phosphorylated by CheA. Phosphorylation of the N-terminal regulatory domain activates the methylesterase activity.

Its subcellular location is the cytoplasm. The enzyme catalyses [protein]-L-glutamate 5-O-methyl ester + H2O = L-glutamyl-[protein] + methanol + H(+). It catalyses the reaction L-glutaminyl-[protein] + H2O = L-glutamyl-[protein] + NH4(+). In terms of biological role, involved in chemotaxis. Part of a chemotaxis signal transduction system that modulates chemotaxis in response to various stimuli. Catalyzes the demethylation of specific methylglutamate residues introduced into the chemoreceptors (methyl-accepting chemotaxis proteins or MCP) by CheR. Also mediates the irreversible deamidation of specific glutamine residues to glutamic acid. This is Protein-glutamate methylesterase/protein-glutamine glutaminase 1 from Geobacter metallireducens (strain ATCC 53774 / DSM 7210 / GS-15).